Here is a 121-residue protein sequence, read N- to C-terminus: Nitrogenase-stabilizing/protective protein NifW (121 aa).

This sequence belongs to the NifW family. In terms of assembly, homotrimer; associates with NifD.

Its function is as follows. May protect the nitrogenase Fe-Mo protein from oxidative damage. The sequence is that of Nitrogenase-stabilizing/protective protein NifW from Synechococcus sp. (strain JA-2-3B'a(2-13)) (Cyanobacteria bacterium Yellowstone B-Prime).